The sequence spans 582 residues: Kelch-like protein diablo (582 aa).

The disordered stretch occupies residues 1–22; it reads MGDVLISDRPPSPARLSHTSEK. The BTB domain occupies 41 to 108; sequence CDVVINVSGR…CYTSHIVVEE (68 aa). In terms of domain architecture, BACK spans 143–245; sequence CLGIRAFADT…SPKFLVGTVG (103 aa). 6 Kelch repeats span residues 292 to 338, 340 to 386, 387 to 433, 435 to 480, 482 to 527, and 528 to 574; these read VLFA…VLND, LYAV…VLDG, FLYA…VLGG, LYAI…VFNN, IYAV…VVNG, and QLYA…VMRA.

Its pathway is protein modification; protein ubiquitination. Functionally, probable substrate-specific adapter of an E3 ubiquitin-protein ligase complex which mediates the ubiquitination and subsequent proteasomal degradation of target proteins. May have a role in synapse differentiation and growth. This Culex quinquefasciatus (Southern house mosquito) protein is Kelch-like protein diablo.